Consider the following 561-residue polypeptide: Putative transport protein YbjL (561 aa).

5 helical membrane passes run 8–28, 32–52, 66–86, 94–114, and 158–178; these read LLNG…LCLG, LGSI…LLGQ, FMLF…SIFF, MLAL…GKLF, and NLSL…IVGA. RCK C-terminal domains follow at residues 200–288 and 292–373; these read RGLD…SFRN and VFDR…RIGF. 5 helical membrane passes run 383-403, 406-426, 451-471, 475-495, and 540-560; these read LLAF…TFQF, FSFG…LGFM, VFMA…LGAI, MLIA…LFGA, and AIAN…WPGL.

Belongs to the AAE transporter (TC 2.A.81) family. YbjL subfamily.

It is found in the cell membrane. The protein is Putative transport protein YbjL of Escherichia coli O127:H6 (strain E2348/69 / EPEC).